The sequence spans 291 residues: ATP synthase gamma chain (291 aa).

This sequence belongs to the ATPase gamma chain family. As to quaternary structure, F-type ATPases have 2 components, CF(1) - the catalytic core - and CF(0) - the membrane proton channel. CF(1) has five subunits: alpha(3), beta(3), gamma(1), delta(1), epsilon(1). CF(0) has three main subunits: a, b and c.

It localises to the cell inner membrane. Produces ATP from ADP in the presence of a proton gradient across the membrane. The gamma chain is believed to be important in regulating ATPase activity and the flow of protons through the CF(0) complex. This Syntrophus aciditrophicus (strain SB) protein is ATP synthase gamma chain.